The sequence spans 500 residues: NF-kappa-B inhibitor epsilon (500 aa).

The segment covering M1–P10 has biased composition (basic and acidic residues). Disordered regions lie at residues M1–A66, L84–S215, and S222–V241. S157, S161, and S183 each carry phosphoserine. Residues S161 to P186 show a composition bias toward low complexity. The span at E196–D209 shows a compositional bias: basic and acidic residues. ANK repeat units follow at residues D258–N291, L293–L322, H326–R355, Q369–V398, S403–A432, and N436–L465.

Belongs to the NF-kappa-B inhibitor family. As to quaternary structure, interacts with RELA, REL, NFKB1 nuclear factor NF-kappa-B p50 subunit and NFKB2 nuclear factor NF-kappa-B p52 subunit. Interacts with HNRNPA2B1; the interaction may be mediated by the RRM2 domain of HNRNPA2B1, and HNRNPA2B1 may interact simultaneously with FAM76B and either NFKBIA or NFKBIE to form a complex. In terms of processing, serine phosphorylated; followed by proteasome-dependent degradation. In terms of tissue distribution, highly expressed in spleen, testis and lung, followed by kidney, pancreas, heart, placenta and brain. Also expressed in granulocytes and macrophages.

It localises to the cytoplasm. Sequesters NF-kappa-B transcription factor complexes in the cytoplasm, thereby inhibiting their activity. Sequestered complexes include NFKB1-RELA (p50-p65) and NFKB1-REL (p50-c-Rel) complexes. Limits B-cell activation in response to pathogens, and also plays an important role in B-cell development. This chain is NF-kappa-B inhibitor epsilon (NFKBIE), found in Homo sapiens (Human).